A 120-amino-acid chain; its full sequence is Secreted effector PIT2 (120 aa).

The first 25 residues, 1 to 25, serve as a signal peptide directing secretion; sequence MLFRSAFVLLIVAFASACLVQHVQA. Residues 46 to 59 form a PID14 protease inhibitor domain region; that stretch reads KLNRRWWFGFTGSL.

In terms of assembly, interacts with host cysteine proteases CP1A, CP1B, XCP2 and CP2. Post-translationally, cleaved by host target papain-like cysteine proteases (PLCPs) to release the embedded inhibitor peptide PID14.

The protein resides in the secreted. Functionally, secreted effector required for virulence. Functions as an inhibitor of a set of apoplastic maize papain-like cysteine proteases (PLCPs) including CP1A, CP1B, XCP2 and CP2, whose activity is directly linked with salicylic-acid-associated plant defenses. Acts as a substrate mimicking molecule for apoplastic PLCPs and its processing releases the embedded inhibitor peptide PID14, which in turn blocks PLCPs to modulate host immunity. The sequence is that of Secreted effector PIT2 from Mycosarcoma maydis (Corn smut fungus).